We begin with the raw amino-acid sequence, 486 residues long: MAGPMCLCGMMRLLTALFIPVLITSVGLCLIFVLLFICTRLWVQRKKKVEIGKDGKKKKVVAFFHPYCNAGGGGERVLWCALRSLQKRYKDAIYVIYTGDKDASEEQILNGAAARFNIKLSHPVRFIFLEKRGLVEASCYPRFTLLGQSLGSVVLGWEALTKCVPDIYIDSMGYAFTLPLFKYLGGCHVGCYVHYPTISMDMLSVVRSQHARFNNAAFISNNPVLSRLKLIYYYLFALFYGWVGSCSDVIMVNSTWTFSHILDLWKCSDRTSIVYPPCDVQTFLEIDINQHKENEEHSVVSIGQFRPEKDHPLQIRAFAALLEKKTAEQRAKLKLILIGGCRNDEDELRVSELKKLSSELGIPVEFKVNVPFEELKKHLSEATIGLHTMWNEHFGIGIVECMAAGTIILAHNSGGPKLDIVVPHEEQQTGFLADSVDSYAAAMDHILSLTPEQRLSIRQNARLSVGRFSDQEFEANFLASSEPLFK.

Residues 1-16 (MAGPMCLCGMMRLLTA) are Lumenal-facing. The chain crosses the membrane as a helical span at residues 17–37 (LFIPVLITSVGLCLIFVLLFI). The Cytoplasmic segment spans residues 38–229 (CTRLWVQRKK…SNNPVLSRLK (192 aa)). An intramembrane region (helical) is located at residues 230-250 (LIYYYLFALFYGWVGSCSDVI). The Cytoplasmic portion of the chain corresponds to 251–393 (MVNSTWTFSH…IGLHTMWNEH (143 aa)). The helical intramembrane region spans 394–414 (FGIGIVECMAAGTIILAHNSG). Residues 415–486 (GPKLDIVVPH…FLASSEPLFK (72 aa)) are Cytoplasmic-facing.

It belongs to the glycosyltransferase group 1 family. Glycosyltransferase 4 subfamily.

The protein resides in the endoplasmic reticulum membrane. It catalyses the reaction an alpha-D-Man-(1-&gt;3)-[alpha-D-Man-(1-&gt;6)]-beta-D-Man-(1-&gt;4)-beta-D-GlcNAc-(1-&gt;4)-alpha-D-GlcNAc-diphospho-di-trans,poly-cis-dolichol + 2 GDP-alpha-D-mannose = an alpha-D-Man-(1-&gt;2)-alpha-D-Man-(1-&gt;2)-alpha-D-Man-(1-&gt;3)-[alpha-D-Man-(1-&gt;6)]-beta-D-Man-(1-&gt;4)-beta-D-GlcNAc-(1-&gt;4)-alpha-D-GlcNAc-diphospho-di-trans,poly-cis-dolichol + 2 GDP + 2 H(+). The protein operates within protein modification; protein glycosylation. GDP-Man:Man(3)GlcNAc(2)-PP-Dol alpha-1,2-mannosyltransferase that operates in the biosynthetic pathway of dolichol-linked oligosaccharides, the glycan precursors employed in protein asparagine (N)-glycosylation. The assembly of dolichol-linked oligosaccharides begins on the cytosolic side of the endoplasmic reticulum membrane and finishes in its lumen. The sequential addition of sugars to dolichol pyrophosphate produces dolichol-linked oligosaccharides containing fourteen sugars, including two GlcNAcs, nine mannoses and three glucoses. Once assembled, the oligosaccharide is transferred from the lipid to nascent proteins by oligosaccharyltransferases. Catalyzes, on the cytoplasmic face of the endoplasmic reticulum, the addition of the fourth and fifth mannose residues to the dolichol-linked oligosaccharide chain, to produce Man(5)GlcNAc(2)-PP-dolichol core oligosaccharide. Man(5)GlcNAc(2)-PP-dolichol is a substrate for ALG3, the following enzyme in the biosynthetic pathway. This is GDP-Man:Man(3)GlcNAc(2)-PP-Dol alpha-1,2-mannosyltransferase (alg11) from Xenopus laevis (African clawed frog).